A 207-amino-acid chain; its full sequence is Large ribosomal subunit protein uL4 (207 aa).

The interval 44–78 (LRQGTHKTKTRSEVRGGGRKPWRQKGTGRARQGSI) is disordered. Residues 60 to 71 (GGRKPWRQKGTG) show a composition bias toward basic residues.

Belongs to the universal ribosomal protein uL4 family. Part of the 50S ribosomal subunit.

Its function is as follows. One of the primary rRNA binding proteins, this protein initially binds near the 5'-end of the 23S rRNA. It is important during the early stages of 50S assembly. It makes multiple contacts with different domains of the 23S rRNA in the assembled 50S subunit and ribosome. Functionally, forms part of the polypeptide exit tunnel. The sequence is that of Large ribosomal subunit protein uL4 from Halalkalibacterium halodurans (strain ATCC BAA-125 / DSM 18197 / FERM 7344 / JCM 9153 / C-125) (Bacillus halodurans).